The chain runs to 131 residues: Profilin-4 (131 aa).

Residues Cys13 and Cys115 are joined by a disulfide bond. Positions 81–97 (AVIRGKKGAGGITVKKT) match the Involved in PIP2 interaction motif. Thr111 carries the post-translational modification Phosphothreonine.

This sequence belongs to the profilin family. Occurs in many kinds of cells as a complex with monomeric actin in a 1:1 ratio. Phosphorylated by MAP kinases.

The protein resides in the cytoplasm. It is found in the cytoskeleton. Its function is as follows. Binds to actin and affects the structure of the cytoskeleton. At high concentrations, profilin prevents the polymerization of actin, whereas it enhances it at low concentrations. The chain is Profilin-4 from Olea europaea (Common olive).